We begin with the raw amino-acid sequence, 548 residues long: Tylosin resistance ATP-binding protein TlrC (548 aa).

2 ABC transporter domains span residues 9–265 (LSLH…RRRQ) and 347–547 (IATA…VSGA). Residues 41–48 (GDNGAGKS) and 387–394 (GPNGAGKS) each bind ATP.

It belongs to the ABC transporter superfamily.

Its subcellular location is the cell membrane. Responsible for tylosin resistance, and is proposed to be a subunit of a multicomponent export system for the energy-dependent efflux of tylosin. This Streptomyces fradiae (Streptomyces roseoflavus) protein is Tylosin resistance ATP-binding protein TlrC (tlrC).